Consider the following 489-residue polypeptide: Protein LMBR1L (489 aa).

Topologically, residues 1–21 (MEAADYEVLSVREQLFHDRVR) are extracellular. Residues 1-59 (MEAADYEVLSVREQLFHDRVRECIISILLFATLYILCHIFLTRFKKPAEFTTVDDEDAT) are interaction with LGB. The interval 1-76 (MEAADYEVLS…LCTFTLAVAL (76 aa)) is LCN1-binding. The chain crosses the membrane as a helical span at residues 22-42 (ECIISILLFATLYILCHIFLT). Topologically, residues 43-66 (RFKKPAEFTTVDDEDATVNKIALE) are cytoplasmic. Residues 67-87 (LCTFTLAVALGAVLLLPFSII) form a helical membrane-spanning segment. Topologically, residues 88–114 (SNEVLLSLPRNYYIQWLNGSLIHGLWN) are extracellular. A helical membrane pass occupies residues 115-135 (LVFLFSNLSLVFLMPFAYFFT). Topologically, residues 136–154 (ESEGFAGSRKGVLGRVYET) are cytoplasmic. Residues 155–175 (VVMLILLTLLVLGMVWVASAI) traverse the membrane as a helical segment. Residues 176–196 (VDNDKASRESLYDFWEYYLPY) lie on the Extracellular side of the membrane. A helical transmembrane segment spans residues 197 to 217 (LYSCISFLGVLLLLVCTPLGL). At 218–305 (ARMFSVTGKL…NLGYPLAMLC (88 aa)) the chain is on the cytoplasmic side. Residues 306–326 (LLVLTGLSVLIVAVHILELLI) traverse the membrane as a helical segment. Residues 327-350 (DEAAMPRGMQDAALGQASFSKLGS) lie on the Extracellular side of the membrane. The helical transmembrane segment at 351–371 (FGAIIQVVLIFYLMVSSVVGF) threads the bilayer. Residues 372-388 (YSSPLFGSLRPRWHDTS) lie on the Cytoplasmic side of the membrane. Residues 389–409 (MTQIIGNCVCLLVLSSALPVF) form a helical membrane-spanning segment. Residues 410–431 (SRTLGLTRFDLLGDFGRFNWLG) are Extracellular-facing. A helical transmembrane segment spans residues 432–452 (NFYIVFLYNAAFAGLTTLCLV). Over 453-489 (KTFTAAVRAELIRAFGLDRLPLPVSGFPRASRKKQHQ) the chain is Cytoplasmic.

It belongs to the LIMR family. Dimer. Can also form higher oligomers. Interacts with LCN1; this interaction mediates the endocytosis of LCN1. Interacts with UBAC2, FAF2, VCP, AMFR, ZNRF3, CTNNB1, LRP6, GSK3B, FZD6, DVL2 and RNF43. Interacts with GSK3A. Interaction with LGB and SCGB1A1 is controversial. Highly expressed in the bone marrow, thymus, spleen and lymphocytes.

It localises to the cell membrane. The protein localises to the endoplasmic reticulum membrane. Functionally, plays an essential role in lymphocyte development by negatively regulating the canonical Wnt signaling pathway. In association with UBAC2 and E3 ubiquitin-protein ligase AMFR, promotes the ubiquitin-mediated degradation of CTNNB1 and Wnt receptors FZD6 and LRP6. LMBR1L stabilizes the beta-catenin destruction complex that is required for regulating CTNNB1 levels. Acts as a LCN1 receptor and can mediate its endocytosis. This is Protein LMBR1L (Lmbr1l) from Mus musculus (Mouse).